Here is a 457-residue protein sequence, read N- to C-terminus: Phosphoglucosamine mutase (457 aa).

The active-site Phosphoserine intermediate is S103. Mg(2+)-binding residues include S103, D244, D246, and D248. Position 103 is a phosphoserine (S103).

Belongs to the phosphohexose mutase family. Mg(2+) serves as cofactor. Activated by phosphorylation.

The catalysed reaction is alpha-D-glucosamine 1-phosphate = D-glucosamine 6-phosphate. In terms of biological role, catalyzes the conversion of glucosamine-6-phosphate to glucosamine-1-phosphate. The chain is Phosphoglucosamine mutase from Granulibacter bethesdensis (strain ATCC BAA-1260 / CGDNIH1).